The following is a 134-amino-acid chain: Ribonuclease P protein component (134 aa).

It belongs to the RnpA family. As to quaternary structure, consists of a catalytic RNA component (M1 or rnpB) and a protein subunit.

The catalysed reaction is Endonucleolytic cleavage of RNA, removing 5'-extranucleotides from tRNA precursor.. Functionally, RNaseP catalyzes the removal of the 5'-leader sequence from pre-tRNA to produce the mature 5'-terminus. It can also cleave other RNA substrates such as 4.5S RNA. The protein component plays an auxiliary but essential role in vivo by binding to the 5'-leader sequence and broadening the substrate specificity of the ribozyme. This chain is Ribonuclease P protein component, found in Pseudomonas putida (strain ATCC 700007 / DSM 6899 / JCM 31910 / BCRC 17059 / LMG 24140 / F1).